We begin with the raw amino-acid sequence, 444 residues long: Serine--tRNA ligase (444 aa).

248-250 lines the L-serine pocket; it reads TSE. 279 to 281 serves as a coordination point for ATP; sequence RSE. Glu302 contributes to the L-serine binding site. Position 366–369 (366–369) interacts with ATP; it reads EISS. An L-serine-binding site is contributed by Ser401.

Belongs to the class-II aminoacyl-tRNA synthetase family. Type-1 seryl-tRNA synthetase subfamily. As to quaternary structure, homodimer. The tRNA molecule binds across the dimer.

The protein localises to the cytoplasm. The catalysed reaction is tRNA(Ser) + L-serine + ATP = L-seryl-tRNA(Ser) + AMP + diphosphate + H(+). It catalyses the reaction tRNA(Sec) + L-serine + ATP = L-seryl-tRNA(Sec) + AMP + diphosphate + H(+). The protein operates within aminoacyl-tRNA biosynthesis; selenocysteinyl-tRNA(Sec) biosynthesis; L-seryl-tRNA(Sec) from L-serine and tRNA(Sec): step 1/1. Functionally, catalyzes the attachment of serine to tRNA(Ser). Is also able to aminoacylate tRNA(Sec) with serine, to form the misacylated tRNA L-seryl-tRNA(Sec), which will be further converted into selenocysteinyl-tRNA(Sec). The protein is Serine--tRNA ligase of Polaromonas naphthalenivorans (strain CJ2).